We begin with the raw amino-acid sequence, 72 residues long: Protein SlyX (72 aa).

It belongs to the SlyX family.

This is Protein SlyX from Cronobacter sakazakii (strain ATCC BAA-894) (Enterobacter sakazakii).